The following is a 616-amino-acid chain: Cytochrome c oxidase subunit 1 (616 aa).

The helical transmembrane segment at 28–48 (HLYLISGGFFFLLGGLEALFI) threads the bilayer. Fe(II)-heme a is bound at residue His72. The next 6 helical transmembrane spans lie at 75–95 (TMIF…VVPL), 102–122 (VAFP…GLFL), 158–178 (GLQI…VTII), 198–218 (FVTS…LIFM), 243–263 (LFWV…FGIF), and 275–295 (LFGY…GFMV). Positions 249 and 253 each coordinate Cu cation. The segment at residues 249–253 (HPEVY) is a cross-link (1'-histidyl-3'-tyrosine (His-Tyr)). 2 residues coordinate Cu cation: His298 and His299. 7 helical membrane-spanning segments follow: residues 303–323 (VGMG…IAVP), 349–369 (AVAF…LASA), 380–400 (FVVA…LLAG), 420–440 (ITFW…HFLG), 463–483 (ISTI…INIV), 553–573 (SSFL…GFTY), and 577–597 (AGWG…SMFL). His384 lines the Fe(II)-heme o pocket. Heme a3 is bound at residue His384. Residue His386 coordinates Fe(II)-heme a.

It belongs to the heme-copper respiratory oxidase family. Cu(2+) is required as a cofactor. Heme serves as cofactor.

It localises to the cell membrane. The enzyme catalyses 4 Fe(II)-[cytochrome c] + O2 + 8 H(+)(in) = 4 Fe(III)-[cytochrome c] + 2 H2O + 4 H(+)(out). It functions in the pathway energy metabolism; oxidative phosphorylation. Functionally, cytochrome c oxidase is the component of the respiratory chain that catalyzes the reduction of oxygen to water. Subunits 1-3 form the functional core of the enzyme complex. Co I is the catalytic subunit of the enzyme. Electrons originating in cytochrome c are transferred via the copper A center of subunit 2 and heme a of subunit 1 to the bimetallic center formed by heme a3 and copper B. This cytochrome c oxidase shows proton pump activity across the membrane in addition to the electron transfer. The sequence is that of Cytochrome c oxidase subunit 1 (ctaD) from Bacillus sp. (strain PS3).